A 508-amino-acid chain; its full sequence is Probable cytochrome P450 6d5 (508 aa).

Cys453 is a heme binding site.

It belongs to the cytochrome P450 family. Heme serves as cofactor.

The protein localises to the endoplasmic reticulum membrane. It localises to the microsome membrane. Its function is as follows. May be involved in the metabolism of insect hormones and in the breakdown of synthetic insecticides. The chain is Probable cytochrome P450 6d5 (Cyp6d5) from Drosophila melanogaster (Fruit fly).